The chain runs to 637 residues: Epithelial sodium channel subunit alpha (637 aa).

The tract at residues 1-34 (MGTASRGGSVKAEKMPEGEKTRQCKQETEQQQKE) is disordered. Residues 1–76 (MGTASRGGSV…VCSKKNKMKT (76 aa)) lie on the Cytoplasmic side of the membrane. Positions 11 to 34 (KAEKMPEGEKTRQCKQETEQQQKE) are enriched in basic and acidic residues. The helical transmembrane segment at 77-97 (AFWSVLFILTFGLMYWQFGIL) threads the bilayer. Residues 98–548 (YREYFSYPVN…NQWSLWFGSS (451 aa)) are Extracellular-facing. 10 disulfides stabilise this stretch: C125–C292, C217–C224, C269–C276, C380–C465, C402–C442, C402–C461, C406–C457, C415–C442, C415–C465, and C417–C431. Residues 549-569 (VLSVMELAELILDFTVITFIL) form a helical membrane-spanning segment. At 570–637 (AFRWFRSKQW…PSKDGETGLE (68 aa)) the chain is on the cytoplasmic side.

It belongs to the amiloride-sensitive sodium channel (TC 1.A.6) family. SCNN1A subfamily. In terms of assembly, heterotrimer; containing an alpha/SCNN1A, a beta/SCNN1B and a gamma/SCNN1G subunit. In terms of tissue distribution, the long isoform has been found in cochlea, colon, and cartilage. The short isoform is only found in cochlea.

It is found in the apical cell membrane. The protein localises to the cell projection. The protein resides in the cilium. It localises to the cytoplasmic granule. Its subcellular location is the cytoplasm. It is found in the cytoplasmic vesicle. The protein localises to the secretory vesicle. The protein resides in the acrosome. It localises to the flagellum. The catalysed reaction is Na(+)(in) = Na(+)(out). Originally identified and characterized by its inhibition by the diuretic drug amiloride. This is one of the three pore-forming subunits of the heterotrimeric epithelial sodium channel (ENaC), a critical regulator of sodium balance and fluid homeostasis. ENaC operates in epithelial tissues, where it mediates the electrodiffusion of sodium ions from extracellular fluid through the apical membrane of cells, with water following osmotically. The protein is Epithelial sodium channel subunit alpha of Gallus gallus (Chicken).